Here is a 637-residue protein sequence, read N- to C-terminus: Delta(14)-sterol reductase LBR (637 aa).

Positions 1–62 (MPNRKYADGE…DIRLQSSFKQ (62 aa)) constitute a Tudor domain. Residues 1–205 (MPNRKYADGE…KTKELEFGGR (205 aa)) lie on the Nuclear side of the membrane. Over residues 57–73 (QSSFKQRKSQSSSSSPS) the composition is skewed to low complexity. Positions 57–151 (QSSFKQRKSQ…SKLLEQQKLK (95 aa)) are disordered. Basic residues predominate over residues 74 to 97 (RRSRSRSRSRSPGRPAKGRRRSSS). Residues S95 and S96 each carry the phosphoserine; by PKA modification. Basic and acidic residues-rich tracts occupy residues 98-110 (HSRE…KKII) and 124-151 (NTRR…QKLK). 8 consecutive transmembrane segments (helical) span residues 206 to 226 (FGTF…VLMC), 250 to 270 (VFGV…LPIG), 288 to 309 (INGF…YFQF), 317 to 338 (HFVQ…YLYI), 378 to 399 (YFCE…MLLA), 403 to 425 (IHNQ…LYVV), 466 to 486 (FYLV…ITIL), and 554 to 574 (PCGF…CLLV).

It belongs to the ERG4/ERG24 family. Interacts with DNA. Interaction with DNA is sequence independent with higher affinity for supercoiled and relaxed circular DNA than linear DNA.

The protein localises to the nucleus inner membrane. The protein resides in the nucleus. It localises to the cytoplasm. Its subcellular location is the endoplasmic reticulum membrane. It catalyses the reaction 5alpha-cholest-8,14-dien-3beta-ol + NADPH + H(+) = 5alpha-cholest-8-en-3beta-ol + NADP(+). The catalysed reaction is 4,4-dimethyl-5alpha-cholesta-8,24-dien-3beta-ol + NADP(+) = 4,4-dimethyl-5alpha-cholesta-8,14,24-trien-3beta-ol + NADPH + H(+). The enzyme catalyses 4,4-dimethyl-8,14-cholestadien-3beta-ol + NADPH + H(+) = 4,4-dimethyl-5alpha-cholest-8-en-3beta-ol + NADP(+). Its pathway is steroid biosynthesis; cholesterol biosynthesis. Its function is as follows. Catalyzes the reduction of the C14-unsaturated bond of lanosterol, as part of the metabolic pathway leading to cholesterol biosynthesis. Anchors the lamina and the heterochromatin to the inner nuclear membrane. The chain is Delta(14)-sterol reductase LBR (LBR) from Gallus gallus (Chicken).